We begin with the raw amino-acid sequence, 580 residues long: Netrin-3 (580 aa).

A signal peptide spans 1-27 (MPGWPWGLLLTAGTLFAALSPGPPAPA). Residues 36 to 254 (APRGCVPGLV…AATDLQVGGR (219 aa)) form the Laminin N-terminal domain. The segment at 62-83 (PATRACDASDPRRAHSPALLTS) is disordered. Disulfide bonds link Cys92-Cys125, Cys255-Cys264, Cys257-Cys274, Cys276-Cys285, Cys288-Cys308, Cys311-Cys320, Cys313-Cys338, Cys341-Cys350, Cys353-Cys371, Cys374-Cys386, Cys376-Cys393, Cys395-Cys404, Cys407-Cys421, Cys441-Cys514, and Cys460-Cys577. Asn104 is a glycosylation site (N-linked (GlcNAc...) asparagine). 3 consecutive Laminin EGF-like domains span residues 255 to 308 (CKCN…SHAC), 311 to 371 (CSCN…RRAC), and 374 to 421 (CDCH…VAPC). An N-linked (GlcNAc...) asparagine glycan is attached at Asn387. The 137-residue stretch at 441-577 (CDSHCKPARG…LQRRERRGRC (137 aa)) folds into the NTR domain. The short motif at 500-502 (RGS) is the Cell attachment site; atypical element.

Spinal cord.

Its subcellular location is the secreted. It localises to the extracellular space. The protein resides in the extracellular matrix. In terms of biological role, netrins control guidance of CNS commissural axons and peripheral motor axons. This is Netrin-3 (NTN3) from Homo sapiens (Human).